The primary structure comprises 292 residues: 4-hydroxy-tetrahydrodipicolinate synthase (292 aa).

Thr-45 lines the pyruvate pocket. Tyr-133 acts as the Proton donor/acceptor in catalysis. The Schiff-base intermediate with substrate role is filled by Lys-161. Ile-203 contributes to the pyruvate binding site.

Belongs to the DapA family. In terms of assembly, homotetramer; dimer of dimers.

It is found in the cytoplasm. It carries out the reaction L-aspartate 4-semialdehyde + pyruvate = (2S,4S)-4-hydroxy-2,3,4,5-tetrahydrodipicolinate + H2O + H(+). The protein operates within amino-acid biosynthesis; L-lysine biosynthesis via DAP pathway; (S)-tetrahydrodipicolinate from L-aspartate: step 3/4. Functionally, catalyzes the condensation of (S)-aspartate-beta-semialdehyde [(S)-ASA] and pyruvate to 4-hydroxy-tetrahydrodipicolinate (HTPA). The protein is 4-hydroxy-tetrahydrodipicolinate synthase of Erwinia tasmaniensis (strain DSM 17950 / CFBP 7177 / CIP 109463 / NCPPB 4357 / Et1/99).